The sequence spans 49 residues: Large ribosomal subunit protein bL33C (49 aa).

This sequence belongs to the bacterial ribosomal protein bL33 family.

In Bacillus pumilus (strain SAFR-032), this protein is Large ribosomal subunit protein bL33C.